The chain runs to 166 residues: Cofilin-2 (166 aa).

Alanine 2 carries the post-translational modification N-acetylalanine. At serine 3 the chain carries Phosphoserine. Residues 4 to 153 (GVTVNDEVIK…KDRSTLGEKL (150 aa)) form the ADF-H domain. The residue at position 6 (threonine 6) is a Phosphothreonine. The Nuclear localization signal motif lies at 30–34 (KKRKK).

The protein belongs to the actin-binding proteins ADF family. Post-translationally, the phosphorylation of Ser-24 may prevent recognition of the nuclear localization signal.

It is found in the nucleus matrix. The protein localises to the cytoplasm. It localises to the cytoskeleton. In terms of biological role, controls reversibly actin polymerization and depolymerization in a pH-sensitive manner. It has the ability to bind G- and F-actin in a 1:1 ratio of cofilin to actin. It is the major component of intranuclear and cytoplasmic actin rods. In Bos taurus (Bovine), this protein is Cofilin-2 (CFL2).